A 1354-amino-acid chain; its full sequence is Rho-associated protein kinase 1 (1354 aa).

At serine 2 the chain carries N-acetylserine. One can recognise a Protein kinase domain in the interval 76 to 338; that stretch reads YEVVKVIGRG…VEEIKRHLFF (263 aa). Residues 82–90 and lysine 105 contribute to the ATP site; that span reads IGRGAFGEV. Aspartate 198 functions as the Proton acceptor in the catalytic mechanism. The region spanning 341-409 is the AGC-kinase C-terminal domain; sequence DQWAWETLRD…YSNRRYLSSA (69 aa). The tract at residues 368–727 is interaction with FHOD1; it reads FDDLEEDKGE…KKLKEEREAR (360 aa). Positions 422–692 form a coiled coil; that stretch reads KSLQESLQKT…RLEQEVNEHK (271 aa). In terms of domain architecture, REM-1 spans 479 to 556; that stretch reads STVSQIEKEK…LEEANDLLRT (78 aa). Lysine 647 carries the post-translational modification N6-acetyllysine. Residues 707 to 946 form an SHROOM3 binding region; that stretch reads EAKSVAMCEM…TVSRLEEANS (240 aa). The region spanning 949–1015 is the RhoBD domain; sequence TKDIEILRRE…LAEIMNRKDF (67 aa). The tract at residues 998–1010 is RHOA binding; it reads LKTQAVNKLAEIM. Residues 1011–1102 are a coiled coil; the sequence is NRKDFKIDRK…KLLDLSDSTS (92 aa). Phosphoserine is present on residues serine 1105 and serine 1108. The interval 1115 to 1354 is auto-inhibitory; the sequence is NLPESRIEGW…VVKNTSGKTS (240 aa). In terms of domain architecture, PH spans 1118–1317; the sequence is ESRIEGWLSV…WVTHLVKKIP (200 aa). A Phorbol-ester/DAG-type zinc finger spans residues 1228-1281; it reads GHEFIPTLYHFPANCDACAKPLWHVFKPPPALECRRCHVKCHRDHLDKKEDLIC. The interval 1320–1354 is disordered; the sequence is PPSGFVRASPRTLSTRSTANQSFRKVVKNTSGKTS. Serine 1328 bears the Phosphoserine mark. Over residues 1330-1354 the composition is skewed to polar residues; the sequence is RTLSTRSTANQSFRKVVKNTSGKTS.

It belongs to the protein kinase superfamily. AGC Ser/Thr protein kinase family. In terms of assembly, homodimer. Interacts with RHOB, RHOC, MYLC2B and PTEN. Interacts with ITGB1BP1 (via N-terminus and PTB domain). Interacts with RHOA (activated by GTP), CHORDC1, DAPK3, GEM, JIP3, RHOE, PPP1R12A, PFN1, LIMK1, LIMK2 and TSG101. Interacts with FHOD1 in a Src-dependent manner. Interacts with SHROOM3. Requires Mg(2+) as cofactor. In terms of processing, autophosphorylated on serine and threonine residues. Post-translationally, cleaved by caspase-3 during apoptosis. This leads to constitutive activation of the kinase and membrane blebbing. Detected in blood platelets.

It is found in the cytoplasm. The protein resides in the cytoskeleton. The protein localises to the microtubule organizing center. Its subcellular location is the centrosome. It localises to the centriole. It is found in the golgi apparatus membrane. The protein resides in the cell projection. The protein localises to the bleb. Its subcellular location is the cell membrane. It localises to the lamellipodium. It is found in the ruffle. The catalysed reaction is L-seryl-[protein] + ATP = O-phospho-L-seryl-[protein] + ADP + H(+). The enzyme catalyses L-threonyl-[protein] + ATP = O-phospho-L-threonyl-[protein] + ADP + H(+). With respect to regulation, activated by RHOA binding. Inhibited by Y-27632. Its function is as follows. Protein kinase which is a key regulator of the actin cytoskeleton and cell polarity. Involved in regulation of smooth muscle contraction, actin cytoskeleton organization, stress fiber and focal adhesion formation, neurite retraction, cell adhesion and motility via phosphorylation of DAPK3, GFAP, LIMK1, LIMK2, MYL9/MLC2, TPPP, PFN1 and PPP1R12A. Phosphorylates FHOD1 and acts synergistically with it to promote SRC-dependent non-apoptotic plasma membrane blebbing. Phosphorylates JIP3 and regulates the recruitment of JNK to JIP3 upon UVB-induced stress. Acts as a suppressor of inflammatory cell migration by regulating PTEN phosphorylation and stability. Acts as a negative regulator of VEGF-induced angiogenic endothelial cell activation. Required for centrosome positioning and centrosome-dependent exit from mitosis. Plays a role in terminal erythroid differentiation. Inhibits podocyte motility via regulation of actin cytoskeletal dynamics and phosphorylation of CFL1. Promotes keratinocyte terminal differentiation. Involved in osteoblast compaction through the fibronectin fibrillogenesis cell-mediated matrix assembly process, essential for osteoblast mineralization. May regulate closure of the eyelids and ventral body wall by inducing the assembly of actomyosin bundles. The protein is Rho-associated protein kinase 1 (ROCK1) of Homo sapiens (Human).